A 100-amino-acid chain; its full sequence is Putative septation protein SpoVG (100 aa).

It belongs to the SpoVG family.

Could be involved in septation. The polypeptide is Putative septation protein SpoVG (Staphylococcus aureus (strain JH1)).